An 873-amino-acid chain; its full sequence is Chitin synthase F (873 aa).

A disordered region spans residues Met-1–Pro-105. 3 stretches are compositionally biased toward polar residues: residues Ser-33–Leu-46, Ile-58–Ser-72, and Glu-80–Gly-98. An N-linked (GlcNAc...) asparagine glycan is attached at Asn-506. 7 helical membrane-spanning segments follow: residues Leu-532–Ala-554, Ile-588–Ala-608, Ile-621–Leu-641, Gly-672–Tyr-692, Ser-702–Cys-722, Leu-802–Val-822, and Val-841–Leu-861.

The protein belongs to the chitin synthase family. Class III subfamily.

The protein resides in the cell membrane. It carries out the reaction [(1-&gt;4)-N-acetyl-beta-D-glucosaminyl](n) + UDP-N-acetyl-alpha-D-glucosamine = [(1-&gt;4)-N-acetyl-beta-D-glucosaminyl](n+1) + UDP + H(+). Polymerizes chitin, a structural polymer of the cell wall and septum, by transferring the sugar moiety of UDP-GlcNAc to the non-reducing end of the growing chitin polymer. Plays an important role in septal growth or maintenance. Mediates colony spore formation. The sequence is that of Chitin synthase F from Aspergillus niger (strain ATCC MYA-4892 / CBS 513.88 / FGSC A1513).